The chain runs to 437 residues: Putrescine hydroxycinnamoyltransferase 3 (437 aa).

Active-site proton acceptor residues include His151 and Asp383.

It belongs to the plant acyltransferase family. In terms of tissue distribution, highly expressed in roots. Expressed at low levels in shoots and flowers.

In terms of biological role, hydroxycinnamoyl transferase that catalyzes the transfer of an acyl from p-coumaryol-CoA to putrescine, to produce coumaroyl putrescine. Can use feruloyl-CoA and caffeoyl-CoA as acyl donors. The chain is Putrescine hydroxycinnamoyltransferase 3 from Oryza sativa subsp. japonica (Rice).